A 164-amino-acid polypeptide reads, in one-letter code: General odorant-binding protein 1 (164 aa).

Positions 1–19 are cleaved as a signal peptide; it reads MPGVLRALLLLAAAAPLLA. 3 disulfide bridges follow: Cys-38-Cys-73, Cys-69-Cys-127, and Cys-116-Cys-136.

The protein belongs to the PBP/GOBP family. Antenna.

Functionally, present in the aqueous fluid surrounding olfactory sensory dendrites and are thought to aid in the capture and transport of hydrophobic odorants into and through this fluid. In Heliothis virescens (Tobacco budworm moth), this protein is General odorant-binding protein 1.